The sequence spans 149 residues: Potassium binding protein Kbp (149 aa).

Positions 23-91 constitute a BON domain; sequence DKDDQAKKVQ…SVDDQVKTAT (69 aa). In terms of domain architecture, LysM spans 97-146; the sequence is QFYTVKSGDTLSAISKQVYGNANLYNKIFEANKPMLKSPDKIYPGQVLRI.

Its subcellular location is the cytoplasm. Functionally, highly specific potassium binding protein that is required for normal growth in the presence of high levels of external K(+). May act as a sensor of cytoplasmic K(+) concentration. In Escherichia coli O6:H1 (strain CFT073 / ATCC 700928 / UPEC), this protein is Potassium binding protein Kbp.